A 120-amino-acid chain; its full sequence is Large ribosomal subunit protein uL18 (120 aa).

Belongs to the universal ribosomal protein uL18 family. Part of the 50S ribosomal subunit; part of the 5S rRNA/L5/L18/L25 subcomplex. Contacts the 5S and 23S rRNAs.

In terms of biological role, this is one of the proteins that bind and probably mediate the attachment of the 5S RNA into the large ribosomal subunit, where it forms part of the central protuberance. The polypeptide is Large ribosomal subunit protein uL18 (Bacillus cereus (strain G9842)).